A 308-amino-acid chain; its full sequence is MTERRRHAIDLDDFTATEIEEILETAESMREVLSREIKQVPALRGKTVVNMFFEESTRTRISFELAARALSANVVAFTARGSSVEKGESLVDTVRTLQALGADIIVMRHSRSGAPYLVARHFRGALINAGDGRHAHPTQALLDLYTMRSHHGQIRDLNVVIVGDILHSRVVRSNLWGLTRLGARVTLCGPPTLIGPSAFWTATWPTVRIAYDLDPLLAEADVVMALRLQKERMQHGLLPALREYTRIYGLTPERLARLPAHAIVMHPGPMNEGIEIFPEVATSATAVIEEQVTNGVAVRMALLYRMAG.

Carbamoyl phosphate-binding residues include R58 and T59. An L-aspartate-binding site is contributed by K86. 3 residues coordinate carbamoyl phosphate: R108, H136, and Q139. Residues R169 and R227 each contribute to the L-aspartate site. Residues G268 and P269 each coordinate carbamoyl phosphate.

Belongs to the aspartate/ornithine carbamoyltransferase superfamily. ATCase family. In terms of assembly, heterododecamer (2C3:3R2) of six catalytic PyrB chains organized as two trimers (C3), and six regulatory PyrI chains organized as three dimers (R2).

It carries out the reaction carbamoyl phosphate + L-aspartate = N-carbamoyl-L-aspartate + phosphate + H(+). The protein operates within pyrimidine metabolism; UMP biosynthesis via de novo pathway; (S)-dihydroorotate from bicarbonate: step 2/3. Its function is as follows. Catalyzes the condensation of carbamoyl phosphate and aspartate to form carbamoyl aspartate and inorganic phosphate, the committed step in the de novo pyrimidine nucleotide biosynthesis pathway. This Chloroflexus aggregans (strain MD-66 / DSM 9485) protein is Aspartate carbamoyltransferase catalytic subunit.